The sequence spans 628 residues: tRNA uridine 5-carboxymethylaminomethyl modification enzyme MnmG (628 aa).

An FAD-binding site is contributed by 14–19 (GAGHAG). NAD(+) is bound at residue 274-288 (GPRYCPSIEDKIVRF).

It belongs to the MnmG family. In terms of assembly, homodimer. Heterotetramer of two MnmE and two MnmG subunits. It depends on FAD as a cofactor.

The protein localises to the cytoplasm. Functionally, NAD-binding protein involved in the addition of a carboxymethylaminomethyl (cmnm) group at the wobble position (U34) of certain tRNAs, forming tRNA-cmnm(5)s(2)U34. The protein is tRNA uridine 5-carboxymethylaminomethyl modification enzyme MnmG of Clostridium kluyveri (strain ATCC 8527 / DSM 555 / NBRC 12016 / NCIMB 10680 / K1).